The primary structure comprises 149 residues: UPF0756 membrane protein BBR47_12340 (149 aa).

A run of 4 helical transmembrane segments spans residues 6-26, 48-68, 86-106, and 120-140; these read IILLVIALLSLVAKDLVLVYA, PMFHVGLFCLMVFLLIPIAKG, IAILAGFIISYVGGKGLSILP, and LLAVLLSNGLPAGLIIAAGCI.

It belongs to the UPF0756 family.

The protein localises to the cell membrane. The protein is UPF0756 membrane protein BBR47_12340 of Brevibacillus brevis (strain 47 / JCM 6285 / NBRC 100599).